Reading from the N-terminus, the 116-residue chain is U16-barytoxin-Tl1f (116 aa).

The N-terminal stretch at 1-20 is a signal peptide; it reads MKTIIVFLSLLVLATKFGDA. Residues 21–74 constitute a propeptide that is removed on maturation; it reads NEGVNQEQMKEVIQNEFREDFLNEMAPMSLLQQLEAIESTLLEKEADRNSRQKR. 3 disulfide bridges follow: C75–C90, C82–C95, and C89–C110. N-linked (GlcNAc...) asparagine glycosylation is present at N85.

The protein belongs to the neurotoxin 14 (magi-1) family. 06 (ICK-Trit) subfamily. In terms of tissue distribution, expressed by the venom gland.

Its subcellular location is the secreted. Its function is as follows. Ion channel inhibitor. This is U16-barytoxin-Tl1f from Trittame loki (Brush-footed trapdoor spider).